A 193-amino-acid chain; its full sequence is Thioredoxin reductase-like selenoprotein T1b (193 aa).

An N-terminal signal peptide occupies residues 1–21 (METRCLYLLLVCVLSVNHATA). Positions 44 to 47 (CVSU) form a cross-link, cysteinyl-selenocysteine (Cys-Sec). Position 47 (Sec47) is a non-standard amino acid, selenocysteine.

The protein belongs to the SelWTH family. Selenoprotein T subfamily. May contain a selenide-sulfide bond between Cys-44 and Sec-47. This bond is speculated to serve as redox-active pair. As to expression, widely expressed in the embryo. High level in embryonic blood at 24 hours post-fertilization (hpf).

Its subcellular location is the endoplasmic reticulum membrane. The enzyme catalyses [thioredoxin]-dithiol + NADP(+) = [thioredoxin]-disulfide + NADPH + H(+). In terms of biological role, selenoprotein with thioredoxin reductase-like oxidoreductase activity. This Danio rerio (Zebrafish) protein is Thioredoxin reductase-like selenoprotein T1b.